The chain runs to 426 residues: 3-phosphoshikimate 1-carboxyvinyltransferase (426 aa).

Lys-22, Ser-23, and Arg-27 together coordinate 3-phosphoshikimate. Lys-22 serves as a coordination point for phosphoenolpyruvate. Phosphoenolpyruvate is bound by residues Gly-96 and Arg-124. 3-phosphoshikimate-binding residues include Ser-170, Ser-171, Gln-172, Ser-198, Asp-314, Asn-337, and Lys-341. Gln-172 serves as a coordination point for phosphoenolpyruvate. Asp-314 (proton acceptor) is an active-site residue. Phosphoenolpyruvate contacts are provided by Arg-345, Arg-387, and Lys-412.

Belongs to the EPSP synthase family. Monomer.

The protein localises to the cytoplasm. It carries out the reaction 3-phosphoshikimate + phosphoenolpyruvate = 5-O-(1-carboxyvinyl)-3-phosphoshikimate + phosphate. It participates in metabolic intermediate biosynthesis; chorismate biosynthesis; chorismate from D-erythrose 4-phosphate and phosphoenolpyruvate: step 6/7. Catalyzes the transfer of the enolpyruvyl moiety of phosphoenolpyruvate (PEP) to the 5-hydroxyl of shikimate-3-phosphate (S3P) to produce enolpyruvyl shikimate-3-phosphate and inorganic phosphate. The chain is 3-phosphoshikimate 1-carboxyvinyltransferase from Shewanella baltica (strain OS195).